We begin with the raw amino-acid sequence, 479 residues long: Acetylcholine receptor subunit alpha-type acr-15 (479 aa).

A signal peptide spans 1-18 (MLLPILLHFLLLITQLNG). The Extracellular portion of the chain corresponds to 19-230 (SPAEVRLIND…HLRRRTLYYS (212 aa)). Asparagine 60 and asparagine 92 each carry an N-linked (GlcNAc...) asparagine glycan. A disulfide bridge links cysteine 146 with cysteine 160. The N-linked (GlcNAc...) asparagine glycan is linked to asparagine 200. Cysteine 208 and cysteine 209 form a disulfide bridge. Residues 231–251 (FNLIAPVLLTMILVILGFTVS) form a helical membrane-spanning segment. The Cytoplasmic segment spans residues 252–257 (PETCEK). Residues 258–278 (VGLQISVSLAICIFLTIMSEL) form a helical membrane-spanning segment. The Extracellular segment spans residues 279–285 (TPQTSEA). The chain crosses the membrane as a helical span at residues 286–306 (VPLLGVFFHTCNFISVLATSF). Topologically, residues 307-453 (TVYVQSFHFR…WRFAAIVVDR (147 aa)) are cytoplasmic. A helical transmembrane segment spans residues 454–474 (LCLLAFSLLIVVVSIIIALRA). Topologically, residues 475-479 (PYLFA) are extracellular.

The protein belongs to the ligand-gated ion channel (TC 1.A.9) family. Acetylcholine receptor (TC 1.A.9.1) subfamily. Expressed in interneurons, motor neurons, pharyngeal neurons and muscles.

Its subcellular location is the cell membrane. It is found in the postsynaptic cell membrane. Functionally, after binding acetylcholine, the AChR responds by an extensive change in conformation that affects all subunits and leads to opening of an ion-conducting channel across the plasma membrane. Activity is required in glutamatergic neurons to mediate nicotine-induced and nicotine-motivated behaviors. The sequence is that of Acetylcholine receptor subunit alpha-type acr-15 from Caenorhabditis elegans.